A 105-amino-acid chain; its full sequence is Iron-sulfur cluster assembly protein CyaY (105 aa).

Belongs to the frataxin family.

In terms of biological role, involved in iron-sulfur (Fe-S) cluster assembly. May act as a regulator of Fe-S biogenesis. This Photobacterium profundum (strain SS9) protein is Iron-sulfur cluster assembly protein CyaY.